The chain runs to 491 residues: Phosphatidylglycerol--prolipoprotein diacylglyceryl transferase (491 aa).

The next 3 membrane-spanning stretches (helical) occupy residues 24-44, 58-78, and 98-118; these read IPLRAYALCIILGIVVAIWWG, VLDVAMFAVPFGLIGGRAYHV, and IWQGGLGIWGAVFLGGIGAWI. Arg146 is an a 1,2-diacyl-sn-glycero-3-phospho-(1'-sn-glycerol) binding site. Transmembrane regions (helical) follow at residues 192–212 and 256–276; these read IVHPTFLYELLWNVLVVIALV and INNFTSALVFLAAIAYFVFAT. The segment covering 309-323 has biased composition (low complexity); it reads NGPAEPGATASTATD. Residues 309–491 are disordered; that stretch reads NGPAEPGATA…DRVDSGENDA (183 aa). Positions 347–360 are enriched in basic and acidic residues; the sequence is KGDRGTADAADTAK. 3 stretches are compositionally biased toward low complexity: residues 361–387, 394–406, and 415–438; these read DASATDSASNSASATDSDFGETAGSSD, AVKAASGATAAEK, and AGEAAADTSAADQPAADKSGSAKS. Residues 453–462 are compositionally biased toward basic and acidic residues; the sequence is NESESTRDNE. Low complexity predominate over residues 463 to 481; sequence STSAGTAASATGSAGAGAT. A compositionally biased stretch (basic and acidic residues) spans 482–491; sequence DRVDSGENDA.

Belongs to the Lgt family.

The protein resides in the cell membrane. The catalysed reaction is L-cysteinyl-[prolipoprotein] + a 1,2-diacyl-sn-glycero-3-phospho-(1'-sn-glycerol) = an S-1,2-diacyl-sn-glyceryl-L-cysteinyl-[prolipoprotein] + sn-glycerol 1-phosphate + H(+). It functions in the pathway protein modification; lipoprotein biosynthesis (diacylglyceryl transfer). Catalyzes the transfer of the diacylglyceryl group from phosphatidylglycerol to the sulfhydryl group of the N-terminal cysteine of a prolipoprotein, the first step in the formation of mature lipoproteins. The polypeptide is Phosphatidylglycerol--prolipoprotein diacylglyceryl transferase (Nocardia farcinica (strain IFM 10152)).